The following is a 250-amino-acid chain: Diaminopimelate epimerase (250 aa).

Residues N11 and N60 each coordinate substrate. The active-site Proton donor is C69. Residues 70–71 (GN), N164, and 182–183 (ER) contribute to the substrate site. Residue C192 is the Proton acceptor of the active site. 193–194 (GT) is a substrate binding site.

The protein belongs to the diaminopimelate epimerase family. Homodimer.

The protein resides in the cytoplasm. The enzyme catalyses (2S,6S)-2,6-diaminopimelate = meso-2,6-diaminopimelate. Its pathway is amino-acid biosynthesis; L-lysine biosynthesis via DAP pathway; DL-2,6-diaminopimelate from LL-2,6-diaminopimelate: step 1/1. Catalyzes the stereoinversion of LL-2,6-diaminopimelate (L,L-DAP) to meso-diaminopimelate (meso-DAP), a precursor of L-lysine and an essential component of the bacterial peptidoglycan. The protein is Diaminopimelate epimerase of Nitratiruptor sp. (strain SB155-2).